Reading from the N-terminus, the 393-residue chain is High mobility group protein DSP1 (393 aa).

The disordered stretch occupies residues 153-179 (QMQQQQQQQNVINSASPMSRVKADAKP). 2 DNA-binding regions (HMG box) span residues 179–249 (PRGR…QNYV) and 271–339 (PKRS…TEYK). Residues 364 to 374 (LLAAAAQQQHQ) show a composition bias toward low complexity. Residues 364-393 (LLAAAAQQQHQQLEEQHDDDDGDGDDDENQ) are disordered. A compositionally biased stretch (acidic residues) spans 379–393 (QHDDDDGDGDDDENQ).

The protein belongs to the HMGB family.

It is found in the nucleus. The protein localises to the chromosome. Its function is as follows. Binds preferentially single-stranded DNA and unwinds double-stranded DNA. The sequence is that of High mobility group protein DSP1 (Dsp1) from Drosophila melanogaster (Fruit fly).